The sequence spans 274 residues: NADPH-dependent 7-cyano-7-deazaguanine reductase (274 aa).

V80–S82 contacts substrate. S82–K83 serves as a coordination point for NADPH. The active-site Thioimide intermediate is C181. D188 functions as the Proton donor in the catalytic mechanism. H220–E221 provides a ligand contact to substrate. An NADPH-binding site is contributed by R249–G250.

The protein belongs to the GTP cyclohydrolase I family. QueF type 2 subfamily. Homodimer.

It localises to the cytoplasm. It carries out the reaction 7-aminomethyl-7-carbaguanine + 2 NADP(+) = 7-cyano-7-deazaguanine + 2 NADPH + 3 H(+). The protein operates within tRNA modification; tRNA-queuosine biosynthesis. Its function is as follows. Catalyzes the NADPH-dependent reduction of 7-cyano-7-deazaguanine (preQ0) to 7-aminomethyl-7-deazaguanine (preQ1). This Burkholderia thailandensis (strain ATCC 700388 / DSM 13276 / CCUG 48851 / CIP 106301 / E264) protein is NADPH-dependent 7-cyano-7-deazaguanine reductase.